Reading from the N-terminus, the 231-residue chain is Endo-1,4-beta-xylanase A (231 aa).

An N-terminal signal peptide occupies residues 1–19 (MVSFKSLLVAVSALTGALA). An N-linked (GlcNAc...) asparagine glycan is attached at asparagine 32. Positions 41–229 (QVTGNSEGYH…SSGSSSIYVQ (189 aa)) constitute a GH11 domain. The active-site Nucleophile is glutamate 125. Glutamate 216 functions as the Proton donor in the catalytic mechanism.

The protein belongs to the glycosyl hydrolase 11 (cellulase G) family.

The protein resides in the secreted. It catalyses the reaction Endohydrolysis of (1-&gt;4)-beta-D-xylosidic linkages in xylans.. It participates in glycan degradation; xylan degradation. Its activity is regulated as follows. Inhibited by the proteinaceous endoxylanase inhibitor I from T.aestivum (TAXI-I). In terms of biological role, endo-1,4-beta-xylanase involved in the hydrolysis of xylan, a major structural heterogeneous polysaccharide found in plant biomass representing the second most abundant polysaccharide in the biosphere, after cellulose. Plays an important role in causing fusarium head blight (FHB) on cereal crops. This Gibberella zeae (strain ATCC MYA-4620 / CBS 123657 / FGSC 9075 / NRRL 31084 / PH-1) (Wheat head blight fungus) protein is Endo-1,4-beta-xylanase A (XYLA).